Here is a 298-residue protein sequence, read N- to C-terminus: MKQELARIEQFLDALWLEKNLAENTLNAYRRDLSMMVEWLHHRGLTLATAQSDDLQALLAERLEGGYKATSSARLLSAVRRLFQYLYREKFREDDPSAHLASPKLPQRLPKDLSEAQVERLLQAPLIDQPLELRDKAMLEVLYATGLRVSELVGLTMSDISLRQGVVRVIGKGNKERLVPLGEEAVYWLETYLEHGRPWLLNGVSIDVLFPSQRAQQMTRQTFWHRIKHYAVLAGIDSEKLSPHVLRHAFATHLLNHGADLRVVQMLLGHSDLSTTQIYTHVATERLRQLHQQHHPRA.

Positions 2–87 constitute a Core-binding (CB) domain; that stretch reads KQELARIEQF…AVRRLFQYLY (86 aa). A Tyr recombinase domain is found at 108–292; it reads RLPKDLSEAQ…ATERLRQLHQ (185 aa). Catalysis depends on residues R148, K172, H244, R247, and H270. The active-site O-(3'-phospho-DNA)-tyrosine intermediate is Y279.

This sequence belongs to the 'phage' integrase family. XerD subfamily. As to quaternary structure, forms a cyclic heterotetrameric complex composed of two molecules of XerC and two molecules of XerD, in which XerC interacts with XerD via its C-terminal region, XerD interacts with XerC via its C-terminal region and so on.

It localises to the cytoplasm. FtsK may regulate the catalytic switch between XerC and XerD in the heterotetrameric complex during the two steps of the recombination process. In terms of biological role, site-specific tyrosine recombinase, which acts by catalyzing the cutting and rejoining of the recombining DNA molecules. Binds cooperatively to specific DNA consensus sequences that are separated from XerC binding sites by a short central region, forming the heterotetrameric XerC-XerD complex that recombines DNA substrates. The complex is essential to convert dimers of the bacterial chromosome into monomers to permit their segregation at cell division. It also contributes to the segregational stability of plasmids. In the complex XerD specifically exchanges the bottom DNA strands. The protein is Tyrosine recombinase XerD of Shigella flexneri.